A 205-amino-acid chain; its full sequence is High frequency lysogenization protein HflD homolog (205 aa).

This sequence belongs to the HflD family.

Its subcellular location is the cytoplasm. The protein resides in the cell inner membrane. This is High frequency lysogenization protein HflD homolog from Vibrio vulnificus (strain CMCP6).